A 702-amino-acid chain; its full sequence is Ribosomal RNA large subunit methyltransferase K/L (702 aa).

The THUMP domain occupies 43–154 (LIYQSLMWSR…KETASIALDL (112 aa)).

It belongs to the methyltransferase superfamily. RlmKL family.

It localises to the cytoplasm. The enzyme catalyses guanosine(2445) in 23S rRNA + S-adenosyl-L-methionine = N(2)-methylguanosine(2445) in 23S rRNA + S-adenosyl-L-homocysteine + H(+). It carries out the reaction guanosine(2069) in 23S rRNA + S-adenosyl-L-methionine = N(2)-methylguanosine(2069) in 23S rRNA + S-adenosyl-L-homocysteine + H(+). Functionally, specifically methylates the guanine in position 2445 (m2G2445) and the guanine in position 2069 (m7G2069) of 23S rRNA. The sequence is that of Ribosomal RNA large subunit methyltransferase K/L from Salmonella agona (strain SL483).